Reading from the N-terminus, the 125-residue chain is Small ribosomal subunit protein eS8 (125 aa).

It belongs to the eukaryotic ribosomal protein eS8 family. As to quaternary structure, part of the 30S ribosomal subunit.

The chain is Small ribosomal subunit protein eS8 from Methanosphaerula palustris (strain ATCC BAA-1556 / DSM 19958 / E1-9c).